The sequence spans 214 residues: Refilin-B (214 aa).

A disordered region spans residues M1 to G56. Residues S6 and S26 each carry the phosphoserine modification.

It belongs to the Refilin family. Interacts with FLNA and FLNB.

Its subcellular location is the cytoplasm. The protein resides in the cytoskeleton. Functionally, involved in the regulation of the perinuclear actin network and nuclear shape through interaction with filamins. Plays an essential role in the formation of cartilaginous skeletal elements. The protein is Refilin-B of Homo sapiens (Human).